The primary structure comprises 516 residues: 2-isopropylmalate synthase (516 aa).

The region spanning 5–267 is the Pyruvate carboxyltransferase domain; that stretch reads VIIFDTTLRD…STNIVHKEIY (263 aa). Residues Asp-14, His-202, His-204, and Asn-238 each contribute to the Mn(2+) site. Residues 392 to 516 form a regulatory domain region; it reads YLKFFSVQSI…NKKLKNLKKY (125 aa).

Belongs to the alpha-IPM synthase/homocitrate synthase family. LeuA type 1 subfamily. Homodimer. Requires Mn(2+) as cofactor.

Its subcellular location is the cytoplasm. It catalyses the reaction 3-methyl-2-oxobutanoate + acetyl-CoA + H2O = (2S)-2-isopropylmalate + CoA + H(+). It functions in the pathway amino-acid biosynthesis; L-leucine biosynthesis; L-leucine from 3-methyl-2-oxobutanoate: step 1/4. In terms of biological role, catalyzes the condensation of the acetyl group of acetyl-CoA with 3-methyl-2-oxobutanoate (2-ketoisovalerate) to form 3-carboxy-3-hydroxy-4-methylpentanoate (2-isopropylmalate). The protein is 2-isopropylmalate synthase of Buchnera aphidicola subsp. Diuraphis noxia.